We begin with the raw amino-acid sequence, 131 residues long: ATP synthase epsilon chain (131 aa).

This sequence belongs to the ATPase epsilon chain family. F-type ATPases have 2 components, CF(1) - the catalytic core - and CF(0) - the membrane proton channel. CF(1) has five subunits: alpha(3), beta(3), gamma(1), delta(1), epsilon(1). CF(0) has three main subunits: a, b and c.

The protein resides in the cell inner membrane. In terms of biological role, produces ATP from ADP in the presence of a proton gradient across the membrane. The polypeptide is ATP synthase epsilon chain (Helicobacter hepaticus (strain ATCC 51449 / 3B1)).